A 2131-amino-acid chain; its full sequence is Nonribosomal peptide synthetase criC (2131 aa).

The tract at residues 13–407 (FSQQCFQHPD…GRRDRVTKIR (395 aa)) is adenylation 1. Residues 525 to 601 (SGPLTIDQTI…ALVEKNRHET (77 aa)) form the Carrier 1 domain. At S562 the chain carries O-(pantetheine 4'-phosphoryl)serine. The segment at 598 to 627 (RHETENRPDSSAFATRTPEESSMPTQGPVT) is disordered. Residues 625-1018 (PVTPLQKRMV…YMSLLDAFLD (394 aa)) form a condensation 1 region. The adenylation 2 stretch occupies residues 1069-1447 (ASLHPTHIAV…GRKDRQVKVR (379 aa)). The Carrier 2 domain occupies 1569–1647 (SSEAHLEKLI…DLITLVAQQQ (79 aa)). Position 1607 is an O-(pantetheine 4'-phosphoryl)serine (S1607). Residues 1688 to 2086 (SQSQSTFNVP…EALLLECFRM (399 aa)) are condensation 2.

Belongs to the NRP synthetase family. Pantetheine 4'-phosphate serves as cofactor.

The enzyme catalyses L-tryptophan + L-alanine + 2 ATP = cyclo(L-tryptophyl-L-alanyl) + 2 ADP + 2 phosphate + 2 H(+). Its pathway is secondary metabolite biosynthesis. It functions in the pathway alkaloid biosynthesis. Its function is as follows. Nonribosomal peptide synthetase; part of the gene cluster that mediates the biosynthesis of echinulin family alkaloid. The pathway begins with the biosynthesis of the cyclic dipeptide cyclo-L-Trp-L-Ala (cyclo-TA) by the NRPS criC via condensation of L-alanine and L-tryptophan. The prenyltransferase criA then catalyzes the first prenylation step, a reverse prenylation reaction at C2, to yield preechinulin. Preechinulin is the substrate of the cytochrome P450 monooxygenase criE that catalyzes the formation of the double bond between C10 and C11 to produce neoechulin A. The unique prenyltransferase criF functions as a competitive enzyme with criE for preechinulin metabolization and uses preechinulin for effective regiospecific prenylations. Preechinulin is prenylated by criF at C5 or C7. C7-prenylation leads to accumulation of tardioxopiperazine B without further modification by criF. In contrast, the C5-prenylated tardioxopiperazine A can be prenylated again by criF, predominantly at C7 to form echinulin or less frequently at C4 to give variecolorin L. CriF also accepts neoechilunin A to produce varlecolorin G (prenylation at C5) or isoechinulin A (prenylation at C7). CriF further converts isoechinulin A into dehydroechinulin. Moreover, a yet unidentified enzyme can also convert neoechilunin A into neoechilunin B by introducing a double bond between positions C14 and C17 and thus provides a further substrate to criF for C5 and C7 prenylation. This Aspergillus cristatus (Chinese Fuzhuan brick tea-fermentation fungus) protein is Nonribosomal peptide synthetase criC.